The sequence spans 1712 residues: MASGSRWRPTPPPLLLLLLLALAARADGLEFGGGPGQWARYARWAGAASSGELSFSLRTNATRALLLYLDDGGDCDFLELLLVDGRLRLRFTLSCAEPATLQLDTPVADDRWHMVLLTRDARRTALAVDGEARAAEVRSKRREMQVASDLFVGGIPPDVRLSALTLSTVKYEPPFRGLLANLKLGERPPALLGSQGLRGATADPLCAPARNPCANGGLCTVLAPGEVGCDCSHTGFGGKFCSEEEHPMEGPAHLTLNSEVGSLLFSEGGAGRGGAGDVHQPTKGKEEFVATFKGNEFFCYDLSHNPIQSSTDEITLAFRTLQRNGLMLHTGKSADYVNLSLKSGAVWLVINLGSGAFEALVEPVNGKFNDNAWHDVRVTRNLRQHAGIGHAMVNKLHYLVTISVDGILTTTGYTQEDYTMLGSDDFFYIGGSPNTADLPGSPVSNNFMGCLKDVVYKNNDFKLELSRLAKEGDPKMKLQGDLSFRCEDVAALDPVTFESPEAFVALPRWSAKRTGSISLDFRTTEPNGLLLFSQGRRAGGGAGSHSSAQRADYFAMELLDGHLYLLLDMGSGGIKLRASSRKVNDGEWCHVDFQRDGRKGSISVNSRSTPFLATGDSEILDLESELYLGGLPEGGRVDLPLPPEVWTAALRAGYVGCVRDLFIDGRSRDLRGLAEAQGAVGVAPFCSRETLKQCASAPCRNGGVCREGWNRFICDCIGTGFLGRVCEREATVLSYDGSMYMKIMLPNAMHTEAEDVSLRFMSQRAYGLMMATTSRESADTLRLELDGGQMKLTVNLDCLRVGCAPSKGPETLFAGHKLNDNEWHTVRVVRRGKSLQLSVDNVTVEGQMAGAHMRLEFHNIETGIMTERRFISVVPSNFIGHLSGLVFNGQPYMDQCKDGDITYCELNARFGLRAIVADPVTFKSRSSYLALATLQAYASMHLFFQFKTTAPDGLLLFNSGNGNDFIVIELVKGYIHYVFDLGNGPSLMKGNSDKPVNDNQWHNVVVSRDPGNVHTLKIDSRTVTQHSNGARNLDLKGELYIGGLSKNMFSNLPKLVASRDGFQGCLASVDLNGRLPDLIADALHRIGQVERGCDGPSTTCTEESCANQGVCLQQWDGFTCDCTMTSYGGPVCNDPGTTYIFGKGGALITYTWPPNDRPSTRMDRLAVGFSTHQRSAVLVRVDSASGLGDYLQLHIDQGTVGVIFNVGTDDITIDEPNAIVSDGKYHVVRFTRSGGNATLQVDSWPVNERYPAGNFDNERLAIARQRIPYRLGRVVDEWLLDKGRQLTIFNSQAAIKIGGRDQGRPFQGQVSGLYYNGLKVLALAAESDPNVRTEGHLRLVGEGPSVLLSAETTATTLLADMATTIMETTTTMATTTTRRGRSPTLRDSTTQNTDDLLVASAECPSDDEDLEECEPSTGGELILPIITEDSLDPPPVATRSPFVPPPPTFYPFLTGVGATQDTLPPPAARRPPSGGPCQAERDDSDCEEPIEASGFASGEVFDSSLPPTDDEDFYTTFPLVTDRTTLLSPRKPAPRPNLRTDGATGAPGVLFAPSAPAPNLPAGKMNHRDPLQPLLENPPLGPGAPTSFEPRRPPPLRPGVTSAPGFPHLPTANPTGPGERGPPGAVEVIRESSSTTGMVVGIVAAAALCILILLYAMYKYRNRDEGSYQVDQSRNYISNSAQSNGAVVKEKAPAAPKTPSKAKKNKDKEYYV.

An N-terminal signal peptide occupies residues 1–28 (MASGSRWRPTPPPLLLLLLLALAARADG). Positions 29 to 206 (LEFGGGPGQW…LRGATADPLC (178 aa)) constitute a Laminin G-like 1 domain. At 29–1636 (LEFGGGPGQW…EVIRESSSTT (1608 aa)) the chain is on the extracellular side. A glycan (N-linked (GlcNAc...) asparagine) is linked at asparagine 60. Residues 202-242 (ADPLCAPARNPCANGGLCTVLAPGEVGCDCSHTGFGGKFCS) enclose the EGF-like 1 domain. Cystine bridges form between cysteine 206–cysteine 219, cysteine 213–cysteine 229, and cysteine 231–cysteine 241. 2 Laminin G-like domains span residues 289–486 (VATF…SFRC) and 493–686 (DPVT…APFC). Aspartate 335 contacts Ca(2+). A glycan (N-linked (GlcNAc...) asparagine) is linked at asparagine 338. Residues leucine 352 and methionine 420 each coordinate Ca(2+). 5 disulfide bridges follow: cysteine 450/cysteine 486, cysteine 657/cysteine 686, cysteine 694/cysteine 705, cysteine 699/cysteine 714, and cysteine 716/cysteine 726. The region spanning 690–727 (TLKQCASAPCRNGGVCREGWNRFICDCIGTGFLGRVCE) is the EGF-like 2 domain. Laminin G-like domains are found at residues 732-904 (VLSY…ITYC) and 918-1093 (DPVT…ERGC). Ca(2+) is bound by residues aspartate 779 and leucine 796. Asparagine 841 carries N-linked (GlcNAc...) asparagine glycosylation. Position 854 (arginine 854) interacts with Ca(2+). 4 cysteine pairs are disulfide-bonded: cysteine 1065–cysteine 1093, cysteine 1100–cysteine 1111, cysteine 1105–cysteine 1120, and cysteine 1122–cysteine 1132. Positions 1096-1133 (PSTTCTEESCANQGVCLQQWDGFTCDCTMTSYGGPVCN) constitute an EGF-like 3 domain. The region spanning 1137-1345 (TTYIFGKGGA…HLRLVGEGPS (209 aa)) is the Laminin G-like 6 domain. The Ca(2+) site is built by aspartate 1189 and valine 1206. Asparagine 1236 carries an N-linked (GlcNAc...) asparagine glycan. Ca(2+) contacts are provided by isoleucine 1288 and asparagine 1290. The segment at 1373–1392 (ATTTTRRGRSPTLRDSTTQN) is disordered. An O-linked (Xyl...) (heparan sulfate) serine glycan is attached at serine 1400. 2 disordered regions span residues 1458-1489 (ATQD…CEEP) and 1525-1626 (TLLS…PGAV). Residues 1637-1657 (GMVVGIVAAAALCILILLYAM) traverse the membrane as a helical segment. Topologically, residues 1658–1712 (YKYRNRDEGSYQVDQSRNYISNSAQSNGAVVKEKAPAAPKTPSKAKKNKDKEYYV) are cytoplasmic. Positions 1679 to 1712 (NSAQSNGAVVKEKAPAAPKTPSKAKKNKDKEYYV) are disordered.

Belongs to the neurexin family. As to quaternary structure, the laminin G-like domain 1 binds to NXPH1. Interacts with PATJ. Interacts with CBLN1, CBLN2 and, less avidly, with CBLN4. Specific isoforms bind neuroligins NLGN1, NLGN2 and NLGN3. Specific isoforms bind to alpha-dystroglycan. Interacts (via Laminin G-like 1 domain) with IGSF21 (Ig-like 1 domain) in a trans-interaction manner. Interacts with CLSTN3. Post-translationally, O-glycosylated; contains heparan sulfate. Heparan sulfate attachment is required for synapse development by mediating interactions with neuroligins. As to expression, predominantly expressed in brain.

Its subcellular location is the presynaptic cell membrane. In terms of biological role, neuronal cell surface protein that may be involved in cell recognition and cell adhesion. May mediate intracellular signaling. This Homo sapiens (Human) protein is Neurexin-2 (NRXN2).